The chain runs to 142 residues: Hemoglobin subunit alpha-A (142 aa).

The Globin domain maps to 2–142 (VLSGSDKTNV…VGNVLTAKYR (141 aa)). Histidine 59 contacts O2. Histidine 88 lines the heme b pocket.

It belongs to the globin family. As to quaternary structure, heterotetramer of two alpha chains and two beta chains. Red blood cells.

Its function is as follows. Involved in oxygen transport from the lung to the various peripheral tissues. The chain is Hemoglobin subunit alpha-A (HBAA) from Ara ararauna (Blue-and-yellow macaw).